Reading from the N-terminus, the 423-residue chain is Hypoxia responsive morphology factor B (423 aa).

Residues 46 to 69 (KRSKTRRPKKEYKLQYENTKAHRV) carry the Bipartite nuclear localization signal motif. The interval 157–187 (TQNCWAYRAAYLNAVHTIFSEQICSAMEVSP) is RNA recognition motif (RRM)-like domain. Residues 243-257 (LSPQSGRGPEPSTQI) are compositionally biased toward polar residues. The segment at 243–273 (LSPQSGRGPEPSTQIAEPGRHDSQSEQSTIS) is disordered.

Belongs to the hrmA family.

The protein localises to the nucleus. Functionally, probably modulates the generation of the hypoxia-typic morphotype (called H-MORPH) with altered biofilm architecture that leads to increased host inflammation, rapid disease progression, and mortality in a murine model of invasive aspergillosis. The sequence is that of Hypoxia responsive morphology factor B from Aspergillus fumigatus (strain CBS 144.89 / FGSC A1163 / CEA10) (Neosartorya fumigata).